The sequence spans 289 residues: MEPAAGIQRRSSQGPTVPPPPRGHAPPAAAPGPAPLSSPVREPPQLEEERQVRISESGQFSDGLEDRGLLESSTRLKPHEAQNYRKKALWVSWFSIIVTLALAVAAFTVSVMRYSASAFGFAFDAILDVLSSAIVLWRYSNAAAVHSAHREYIACVILGVIFLLSSICIVVKAIHDLSTRLLPEVDDFLFSVSILSGILCSILAVLKFMLGKVLTSRALITDGFNSLVGGVMGFSILLSAEVFKHDSAVWYLDGSIGVLIGLTIFAYGVKLLIDMVPRVRQTRHYEMFE.

The interval 1–65 (MEPAAGIQRR…ESGQFSDGLE (65 aa)) is disordered. Residues 1 to 88 (MEPAAGIQRR…HEAQNYRKKA (88 aa)) lie on the Cytoplasmic side of the membrane. S11 bears the Phosphoserine mark. Residues 16–36 (TVPPPPRGHAPPAAAPGPAPL) show a composition bias toward pro residues. The segment at 42–72 (EPPQLEEERQVRISESGQFSDGLEDRGLLES) is required for interaction with MCOLN1. 3 positions are modified to phosphoserine: S55, S57, and S61. Residues 89–109 (LWVSWFSIIVTLALAVAAFTV) form a helical membrane-spanning segment. Over 110-116 (SVMRYSA) the chain is Extracellular. The chain crosses the membrane as a helical span at residues 117–137 (SAFGFAFDAILDVLSSAIVLW). The Cytoplasmic portion of the chain corresponds to 138–150 (RYSNAAAVHSAHR). A helical membrane pass occupies residues 151-171 (EYIACVILGVIFLLSSICIVV). The Extracellular portion of the chain corresponds to 172-187 (KAIHDLSTRLLPEVDD). The helical transmembrane segment at 188–208 (FLFSVSILSGILCSILAVLKF) threads the bilayer. The Cytoplasmic portion of the chain corresponds to 209 to 217 (MLGKVLTSR). The helical transmembrane segment at 218–238 (ALITDGFNSLVGGVMGFSILL) threads the bilayer. The Extracellular portion of the chain corresponds to 239–255 (SAEVFKHDSAVWYLDGS). Residues 256-276 (IGVLIGLTIFAYGVKLLIDMV) traverse the membrane as a helical segment. Over 277-289 (PRVRQTRHYEMFE) the chain is Cytoplasmic.

This sequence belongs to the TMEM163 family. Homodimer. Interacts with MCOLN1/TRPML1. Interacts with SLC30A1, SLC30A2, SLC30A3 and SLC30A4. As to expression, widely expressed. High expression is detected in brain, lung and testis.

The protein resides in the cytoplasmic vesicle. The protein localises to the secretory vesicle. It localises to the synaptic vesicle membrane. Its subcellular location is the early endosome membrane. It is found in the late endosome membrane. The protein resides in the lysosome membrane. The protein localises to the cell membrane. The catalysed reaction is Zn(2+)(in) = Zn(2+)(out). Its function is as follows. Zinc ion transporter that mediates zinc efflux and plays a crucial role in intracellular zinc homeostasis. Binds the divalent cations Zn(2+), Ni(2+), and to a minor extent Cu(2+). Is a functional modulator of P2X purinoceptors, including P2RX1, P2RX3, P2RX4 and P2RX7. Plays a role in central nervous system development and is required for myelination, and survival and proliferation of oligodendrocytes. In Homo sapiens (Human), this protein is Transmembrane protein 163 (TMEM163).